A 405-amino-acid polypeptide reads, in one-letter code: MKVLVLNAGSSSQKSCLYDLPHTQLPQEPPQPLWEAQIDWPHGGDGAKLKIKTVHHRHEKTLQGGSRSEDSARMLETLYSGETRVIADPSEIEMVGHRVVHGGEAYRESTRITPEVKAAIDQLARFAPVHNPANLAGIEALEALLGPQVPQIAVFDTAFHSRLPAAAYVYPGPYEWLDQGIRRYGFHGISHRYCAERAAQILGRDLAQLRLITCHLGNGCSLAAVQGGFSIDTTMGFTPLEGLMMGSRSGSVDPGILIHLMRQADYTVDKLDHILNQASGLEGVSGISNDLRPLFKAIDEGNARAKLALDIYIHRLRAGIGAMAVSLGGLDALIFTAGVGENAAPVRAGACEALGFLGVALDPQKNNGRPRDADIAAADSAVRVLVIHTQEDWAIARECWQHLRR.

Asn-7 contacts Mg(2+). Lys-14 is an ATP binding site. Arg-98 serves as a coordination point for substrate. The active-site Proton donor/acceptor is Asp-156. ATP contacts are provided by residues 215 to 219, 290 to 292, and 338 to 342; these read HLGNG, DLR, and GVGEN. Position 391 (Glu-391) interacts with Mg(2+).

The protein belongs to the acetokinase family. As to quaternary structure, homodimer. Mg(2+) serves as cofactor. Mn(2+) is required as a cofactor.

The protein localises to the cytoplasm. The catalysed reaction is acetate + ATP = acetyl phosphate + ADP. It functions in the pathway metabolic intermediate biosynthesis; acetyl-CoA biosynthesis; acetyl-CoA from acetate: step 1/2. Functionally, catalyzes the formation of acetyl phosphate from acetate and ATP. Can also catalyze the reverse reaction. The protein is Acetate kinase of Gloeobacter violaceus (strain ATCC 29082 / PCC 7421).